The sequence spans 198 residues: Imidazoleglycerol-phosphate dehydratase (198 aa).

Belongs to the imidazoleglycerol-phosphate dehydratase family.

It localises to the cytoplasm. It catalyses the reaction D-erythro-1-(imidazol-4-yl)glycerol 3-phosphate = 3-(imidazol-4-yl)-2-oxopropyl phosphate + H2O. The protein operates within amino-acid biosynthesis; L-histidine biosynthesis; L-histidine from 5-phospho-alpha-D-ribose 1-diphosphate: step 6/9. This Agrobacterium fabrum (strain C58 / ATCC 33970) (Agrobacterium tumefaciens (strain C58)) protein is Imidazoleglycerol-phosphate dehydratase.